The primary structure comprises 785 residues: Gamma-interferon-inducible protein 16 (785 aa).

In terms of domain architecture, Pyrin spans 5-92 (YKNIVLLKGL…KKEKLKAKGL (88 aa)). Lys-45 carries the N6-acetyllysine modification. Over residues 88 to 99 (KAKGLAPSRKRK) the composition is skewed to basic residues. The disordered stretch occupies residues 88-196 (KAKGLAPSRK…TVAKCQATPR (109 aa)). Residue Ser-95 is modified to Phosphoserine. Residues 96-100 (RKRKK) carry the Nuclear localization signal motif. Lys-99 is subject to N6-acetyllysine. The segment covering 104-114 (AASPAPSTSST) has biased composition (low complexity). Position 106 is a phosphoserine (Ser-106). Lys-116 is covalently cross-linked (Glycyl lysine isopeptide (Lys-Gly) (interchain with G-Cter in SUMO2)). N6-acetyllysine; alternate is present on Lys-128. Lys-128 is covalently cross-linked (Glycyl lysine isopeptide (Lys-Gly) (interchain with G-Cter in SUMO2); alternate). 3 consecutive short sequence motifs (nuclear localization signal) follow at residues 128–131 (KRKK), 134–136 (KEK), and 140–143 (KGSK). Low complexity predominate over residues 166-182 (SPSPKTSSSAPPNTSST). 2 positions are modified to phosphoserine: Ser-168 and Ser-174. An interaction with TP53 C-terminus region spans residues 192–393 (QATPRRSVLQ…SFIQIKKKTN (202 aa)). An HIN-200 1 domain is found at 193–393 (ATPRRSVLQK…SFIQIKKKTN (201 aa)). An N6-acetyllysine modification is found at Lys-214. Residues 388–442 (IKKKTNPRNNDPKSMKLPQEQSQLPNPSEAGTTFPESHLWTPQMPPTTPSSSFFT) are disordered. The segment covering 406–422 (QEQSQLPNPSEAGTTFP) has biased composition (polar residues). N6-acetyllysine occurs at positions 444 and 451. The HIN-200 2 domain occupies 566–765 (EVSIEDSAQS…SHIKVIKTRK (200 aa)). Positions 571–766 (DSAQSDLKEV…HIKVIKTRKN (196 aa)) are interaction with TP53 core domain. Ser-575 bears the Phosphoserine mark. An N6-acetyllysine mark is found at Lys-598 and Lys-614. Residue Lys-683 forms a Glycyl lysine isopeptide (Lys-Gly) (interchain with G-Cter in SUMO2) linkage. Position 780 is a phosphoserine (Ser-780).

It belongs to the HIN-200 family. In terms of assembly, forms homooligomers. Interacts with TMEM173, AIM2, PYCARD and CASP1. Interacts with BRCA1, TP53, E2F1, RB1 and SP1. Interacts with MTA1. Interacts with MTA1. Interacts with PYDC5. In terms of processing, lysine acetylation in the multipartite nuclear localization signal (NLS) regulates the subcellular location. Phosphorylated on Ser and Thr.

It localises to the nucleus. The protein localises to the cytoplasm. Functionally, binds double-stranded DNA. Binds preferentially to supercoiled DNA and cruciform DNA structures. Seems to be involved in transcriptional regulation. May function as a transcriptional repressor. Could have a role in the regulation of hematopoietic differentiation through activation of unknown target genes. Controls cellular proliferation by modulating the functions of cell cycle regulatory factors including p53/TP53 and the retinoblastoma protein. May be involved in TP53-mediated transcriptional activation by enhancing TP53 sequence-specific DNA binding and modulating TP53 phosphorylation status. Seems to be involved in energy-level-dependent activation of the ATM/ AMPK/TP53 pathway coupled to regulation of autophagy. May be involved in regulation of TP53-mediated cell death also involving BRCA1. May be involved in the senescence of prostate epithelial cells. Involved in innate immune response by recognizing viral dsDNA in the cytosol and probably in the nucleus. After binding to viral DNA in the cytoplasm recruits TMEM173/STING and mediates the induction of IFN-beta. Has anti-inflammatory activity and inhibits the activation of the AIM2 inflammasome, probably via association with AIM2. Proposed to bind viral DNA in the nucleus and to induce the formation of nuclear caspase-1-activating inflammasome formation via association with PYCARD. Inhibits replication of herpesviruses probably by interfering with promoter recruitment of members of the Sp1 family of transcription factors. This is Gamma-interferon-inducible protein 16 (IFI16) from Pongo abelii (Sumatran orangutan).